Consider the following 416-residue polypeptide: Chaperone protein dnaJ A6 (416 aa).

Residues 12–73 (KYYEVLGVPK…EKRDIYDQYG (62 aa)) form the J domain. The CR-type zinc-finger motif lies at 133–217 (GSMKKLSLSR…CRASKVIQEK (85 aa)). Residues Cys146, Cys149, Cys162, Cys165, Cys189, Cys192, Cys205, and Cys208 each coordinate Zn(2+). 3 CXXCXGXG motif repeats span residues 146–153 (CPKCKGKG), 162–169 (CYGCHGVG), and 189–196 (CPECRGSG). Over residues 380-399 (HDVNIEEEMRRKQYQRKQEA) the composition is skewed to basic and acidic residues. Residues 380 to 416 (HDVNIEEEMRRKQYQRKQEAYDEDEEEDAPRVQCAQQ) form a disordered region.

It belongs to the DnaJ family. As to quaternary structure, interacts with ZFP1.

Its subcellular location is the nucleus. It is found in the cytoplasm. Its function is as follows. Involved in disease resistance. Acts as a negative regulator of innate immunity to the rice blast fungus (Magnaporthe oryzae). Acts as a negative regulator of the pathogen-associated molecular pattern (PAMP)-triggered immunity (PTI) response through the inhibition of reactive oxygen species (ROS) accumulation and expression of defense-related genes. May function via the ubiquitin-proteasome degradation pathway. This Oryza sativa subsp. japonica (Rice) protein is Chaperone protein dnaJ A6.